The following is a 946-amino-acid chain: Bifunctional glutamine synthetase adenylyltransferase/adenylyl-removing enzyme (946 aa).

An adenylyl removase region spans residues 1–440 (MKPLSSPLQQ…VFNELIGDDE (440 aa)). The interval 449–946 (SEQWRELWQD…ASWQKWLVEE (498 aa)) is adenylyl transferase.

The protein belongs to the GlnE family. Mg(2+) is required as a cofactor.

It catalyses the reaction [glutamine synthetase]-O(4)-(5'-adenylyl)-L-tyrosine + phosphate = [glutamine synthetase]-L-tyrosine + ADP. It carries out the reaction [glutamine synthetase]-L-tyrosine + ATP = [glutamine synthetase]-O(4)-(5'-adenylyl)-L-tyrosine + diphosphate. In terms of biological role, involved in the regulation of glutamine synthetase GlnA, a key enzyme in the process to assimilate ammonia. When cellular nitrogen levels are high, the C-terminal adenylyl transferase (AT) inactivates GlnA by covalent transfer of an adenylyl group from ATP to specific tyrosine residue of GlnA, thus reducing its activity. Conversely, when nitrogen levels are low, the N-terminal adenylyl removase (AR) activates GlnA by removing the adenylyl group by phosphorolysis, increasing its activity. The regulatory region of GlnE binds the signal transduction protein PII (GlnB) which indicates the nitrogen status of the cell. The protein is Bifunctional glutamine synthetase adenylyltransferase/adenylyl-removing enzyme of Shigella sonnei (strain Ss046).